A 237-amino-acid polypeptide reads, in one-letter code: MKKEVIIALDFPTLEKTLEFLDKFKEEKLFVKVGMELYLQNGPIVIDEIKKRGHKIFLDLKLHDIPNTVYSAVKGLAKFNIDILTVHAAGGSEMLKGAKRAMTEAGVNTKVIAITQLTSTSEEDMRKEQNIQTSIEESVLNYARLAKESGVDGVVSSVLETKKIREQSGEEFIIINPGIRLAEDSKGDQKRVATPIDANRDGASYIVVGRSITGNENPEERYRLIKNMFEMGDKYVE.

Substrate contacts are provided by residues Asp10, Lys32, 59 to 68, Thr118, Arg180, Gln189, Gly209, and Arg210; that span reads DLKLHDIPNT. The Proton donor role is filled by Lys61.

This sequence belongs to the OMP decarboxylase family. Type 1 subfamily. As to quaternary structure, homodimer.

The catalysed reaction is orotidine 5'-phosphate + H(+) = UMP + CO2. It functions in the pathway pyrimidine metabolism; UMP biosynthesis via de novo pathway; UMP from orotate: step 2/2. In terms of biological role, catalyzes the decarboxylation of orotidine 5'-monophosphate (OMP) to uridine 5'-monophosphate (UMP). The chain is Orotidine 5'-phosphate decarboxylase from Fusobacterium nucleatum subsp. nucleatum (strain ATCC 25586 / DSM 15643 / BCRC 10681 / CIP 101130 / JCM 8532 / KCTC 2640 / LMG 13131 / VPI 4355).